A 396-amino-acid chain; its full sequence is Probable arginine kinase F46H5.3 (396 aa).

The 83-residue stretch at 47-129 (KIEEGYAKLQ…FDPLIQDYHN (83 aa)) folds into the Phosphagen kinase N-terminal domain. 102–106 (GVGVY) is a substrate binding site. Residues 159–396 (FINSTRIRCG…AHLIALEKAA (238 aa)) form the Phosphagen kinase C-terminal domain. Residues 162-166 (STRIR) and H226 contribute to the ATP site. Position 266 (E266) interacts with substrate. R270 contributes to the ATP binding site. Substrate is bound at residue C312. ATP is bound by residues 321–325 (RASVH), 349–354 (RGIHGE), and D364. Residue E354 participates in substrate binding.

The protein belongs to the ATP:guanido phosphotransferase family.

It carries out the reaction L-arginine + ATP = N(omega)-phospho-L-arginine + ADP + H(+). This chain is Probable arginine kinase F46H5.3, found in Caenorhabditis elegans.